A 209-amino-acid polypeptide reads, in one-letter code: Large ribosomal subunit protein uL3 (209 aa).

Residues 122–151 are disordered; sequence AIKRHGQSRGPMSHGSRYHRRPGSMGPVDP.

The protein belongs to the universal ribosomal protein uL3 family. Part of the 50S ribosomal subunit. Forms a cluster with proteins L14 and L19.

One of the primary rRNA binding proteins, it binds directly near the 3'-end of the 23S rRNA, where it nucleates assembly of the 50S subunit. This Bacillus velezensis (strain DSM 23117 / BGSC 10A6 / LMG 26770 / FZB42) (Bacillus amyloliquefaciens subsp. plantarum) protein is Large ribosomal subunit protein uL3.